The following is a 302-amino-acid chain: UDP-N-acetylenolpyruvoylglucosamine reductase (302 aa).

The FAD-binding PCMH-type domain occupies 27 to 192; that stretch reads KVGGAVDYLA…LSAKFALRPG (166 aa). Residue arginine 171 is part of the active site. Serine 221 acts as the Proton donor in catalysis. Residue glutamate 291 is part of the active site.

The protein belongs to the MurB family. Requires FAD as cofactor.

It is found in the cytoplasm. The enzyme catalyses UDP-N-acetyl-alpha-D-muramate + NADP(+) = UDP-N-acetyl-3-O-(1-carboxyvinyl)-alpha-D-glucosamine + NADPH + H(+). Its pathway is cell wall biogenesis; peptidoglycan biosynthesis. Cell wall formation. The protein is UDP-N-acetylenolpyruvoylglucosamine reductase of Streptococcus suis (strain 98HAH33).